Consider the following 329-residue polypeptide: UDP-glucose 4-epimerase (329 aa).

Residues 11 to 12 (YV), 31 to 36 (DNFSTG), 51 to 52 (DV), 71 to 75 (FAARS), threonine 115, tyrosine 139, lysine 143, and phenylalanine 167 contribute to the NAD(+) site. Residues threonine 115 and tyrosine 139 each coordinate substrate. Catalysis depends on tyrosine 139, which acts as the Proton acceptor. Substrate-binding positions include asparagine 168, 185-186 (HL), 202-204 (FMF), arginine 217, and 277-280 (RAGD).

Belongs to the NAD(P)-dependent epimerase/dehydratase family. In terms of assembly, homodimer. It depends on NAD(+) as a cofactor.

It carries out the reaction UDP-alpha-D-glucose = UDP-alpha-D-galactose. It participates in carbohydrate metabolism; galactose metabolism. Its function is as follows. Involved in the metabolism of galactose. Catalyzes the conversion of UDP-galactose (UDP-Gal) to UDP-glucose (UDP-Glc) through a mechanism involving the transient reduction of NAD. This Corynebacterium glutamicum (strain ATCC 13032 / DSM 20300 / JCM 1318 / BCRC 11384 / CCUG 27702 / LMG 3730 / NBRC 12168 / NCIMB 10025 / NRRL B-2784 / 534) protein is UDP-glucose 4-epimerase (galE).